A 305-amino-acid polypeptide reads, in one-letter code: Fatty acid elongase 1 (305 aa).

A run of 7 helical transmembrane segments spans residues 24–44, 80–100, 129–149, 158–178, 183–203, 217–237, and 257–277; these read MIANVDVVLYISFLYLGFVFI, VVWNLALSIFSIFGTSTVTPV, FWMGIFALSKIPELVDTIFLV, FLHWYHHVTVLLFSWHTYCVG, IWVAAMNYSVHSVMYLYFALA, YITIIQILQMVVGCYVTIFAL, and IQLVMYASYLYLFSKMFVASY. Residues 160–164 carry the HxxHH motif motif; it reads HWYHH. The Nucleophile role is filled by H163. A disordered region spans residues 284–305; that stretch reads PTVGGPSSTAGVSNGSVEKKVK. A compositionally biased stretch (polar residues) spans 288 to 299; sequence GPSSTAGVSNGS. N-linked (GlcNAc...) asparagine glycosylation is present at N297.

This sequence belongs to the ELO family.

It is found in the endoplasmic reticulum membrane. It catalyses the reaction an acyl-CoA + malonyl-CoA + H(+) = a 3-oxoacyl-CoA + CO2 + CoA. It participates in lipid metabolism; fatty acid biosynthesis. In terms of biological role, involved in the synthesis of fatty acids. Elongates C4 fatty acids to C10. The protein is Fatty acid elongase 1 of Trypanosoma brucei brucei (strain 927/4 GUTat10.1).